Consider the following 72-residue polypeptide: Guanine nucleotide-binding protein G(I)/G(S)/G(O) subunit gamma-12 (72 aa).

The residue at position 2 (Ser2) is an N-acetylserine. Residues Ser10 and Ser26 each carry the phosphoserine modification. At Tyr42 the chain carries Phosphotyrosine. Ser49 carries the phosphoserine modification. Cys69 carries the post-translational modification Cysteine methyl ester. A lipid anchor (S-geranylgeranyl cysteine) is attached at Cys69. Positions 70–72 (IIL) are cleaved as a propeptide — removed in mature form.

This sequence belongs to the G protein gamma family. G proteins are composed of 3 units, alpha, beta and gamma.

It localises to the cell membrane. Guanine nucleotide-binding proteins (G proteins) are involved as a modulator or transducer in various transmembrane signaling systems. The beta and gamma chains are required for the GTPase activity, for replacement of GDP by GTP, and for G protein-effector interaction. The sequence is that of Guanine nucleotide-binding protein G(I)/G(S)/G(O) subunit gamma-12 (Gng12) from Mus musculus (Mouse).